Here is a 195-residue protein sequence, read N- to C-terminus: Transcription factor 15 (195 aa).

Residues 44–65 (LEAARRGPGPGSGRRASNGAGP) are disordered. The segment covering 56-65 (GRRASNGAGP) has biased composition (low complexity). Position 60 is a phosphoserine (serine 60). One can recognise a bHLH domain in the interval 70–122 (RQRQAANARERDRTQSVNTAFTALRTLIPTEPVDRKLSKIETLRLASSYIAHL).

Heterodimer; efficient DNA binding requires dimerization with another bHLH protein, such as TCF3/E12. Interacts with MEOX2. In terms of tissue distribution, expressed in heart and skeletal muscle. Specifically expressed in a subpopulation of embryonic stem cells (ESCs), that are still undifferentiated but primed for ifferentiation. Expressed in hematopoietic stem cells (HSCs).

It is found in the nucleus. Its function is as follows. Early transcription factor that plays a key role in somitogenesis, paraxial mesoderm development and regulation of stem cell pluripotency. Essential for the mesenchymal to epithelial transition associated with somite formation. Required for somite morphogenesis, thereby regulating patterning of the axial skeleton and skeletal muscles. Required for proper localization of somite epithelium markers during the mesenchymal to epithelial transition. Also plays a key role in regulation of stem cell pluripotency. Promotes pluripotency exit of embryonic stem cells (ESCs) by priming ESCs for differentiation. Acts as a key regulator of self-renewal of hematopoietic stem cells (HSCs) by mediating HSCs quiescence and long-term self-renewal. Together with MEOX2, regulates transcription in heart endothelial cells to regulate fatty acid transport across heart endothelial cells. Acts by forming a heterodimer with another helix-loop-helix (bHLH) protein, such as TCF3/E12, that binds DNA on E-box motifs (5'-CANNTG-3') and activates transcription of target genes. The sequence is that of Transcription factor 15 from Mus musculus (Mouse).